A 463-amino-acid polypeptide reads, in one-letter code: Retinoic acid receptor RXR-gamma (463 aa).

The interval 1 to 138 (MYGNYSHFMK…TSPGSLVKHI (138 aa)) is modulating. A disordered region spans residues 18-53 (SPGHTGSTSMSPSAALSTGKPMDSHPSYTDTPVSAP). Residues 21 to 33 (HTGSTSMSPSAAL) are compositionally biased toward polar residues. Positions 136–211 (KHICAICGDR…MGMKREAVQE (76 aa)) form a DNA-binding region, nuclear receptor. 2 NR C4-type zinc fingers span residues 139 to 159 (CAIC…CEGC) and 175 to 199 (CRDN…YQKC). Positions 205 to 230 (KREAVQEERQRSRERAESEAECATSG) are hinge. The NR LBD domain occupies 231-459 (HEDMPVERIL…TFLMEMLETP (229 aa)).

It belongs to the nuclear hormone receptor family. NR2 subfamily. Homodimer. Heterodimer with a RAR molecule. Binds DNA preferentially as a RAR/RXR heterodimer. Interacts with RARA. Post-translationally, acetylated by EP300. Expressed in aortic endothelial cells (at protein level).

Its subcellular location is the nucleus. The protein resides in the cytoplasm. Receptor for retinoic acid. Retinoic acid receptors bind as heterodimers to their target response elements in response to their ligands, all-trans or 9-cis retinoic acid, and regulate gene expression in various biological processes. The RAR/RXR heterodimers bind to the retinoic acid response elements (RARE) composed of tandem 5'-AGGTCA-3' sites known as DR1-DR5. The high affinity ligand for RXRs is 9-cis retinoic acid. This chain is Retinoic acid receptor RXR-gamma (RXRG), found in Homo sapiens (Human).